A 397-amino-acid chain; its full sequence is Lysophospholipid transporter LplT (397 aa).

The Periplasmic portion of the chain corresponds to 1–17 (MSESVHTNTSLWSKGMK). Residues 18–38 (AVIVAQFLSAFGDNALLFATL) form a helical membrane-spanning segment. Residues 39 to 52 (ALLKAQFYPEWSQP) are Cytoplasmic-facing. A helical membrane pass occupies residues 53 to 73 (ILQMVFVGAYILFAPFVGQVA). The Periplasmic segment spans residues 74 to 90 (DSFAKGRVMMFANGLKL). A helical membrane pass occupies residues 91-111 (LGAASICFGINPFLGYTLVGV). Topologically, residues 112–144 (GAAAYSPAKYGILGELTTGSKLVKANGLMEAST) are cytoplasmic. The helical transmembrane segment at 145-165 (IAAILLGSVAGGVLADWHVLV) threads the bilayer. Position 166 (A166) is a topological domain, periplasmic. The chain crosses the membrane as a helical span at residues 167-187 (LAACALAYGGAVVANIYIPKL). The Cytoplasmic portion of the chain corresponds to 188 to 226 (AAARPGQSWNLINMTRSFLNACTSLWCNGETRFSLVGTS). The helical transmembrane segment at 227-247 (LFWGAGVTLRFLLVLWVPVAL) threads the bilayer. Topologically, residues 248–256 (GITDNATPT) are periplasmic. The chain crosses the membrane as a helical span at residues 257 to 277 (YLNAMVAIGIVVGAGAAAKLV). At 278 to 280 (TLE) the chain is on the cytoplasmic side. A helical membrane pass occupies residues 281–301 (TVSRCMPAGILIGVVVLIFSL). The Periplasmic segment spans residues 302–304 (QHE). The helical transmembrane segment at 305–325 (LLPAYALLMLIGVLGGFFVVP) threads the bilayer. Residues 326 to 343 (LNALLQERGKKSVGAGNA) lie on the Cytoplasmic side of the membrane. A helical membrane pass occupies residues 344-364 (IAVQNLGENSAMLLMLGIYSL). At 365-366 (AV) the chain is on the periplasmic side. Residues 367-387 (MVGIPVVPIGIGFGALFALAI) traverse the membrane as a helical segment. The Cytoplasmic portion of the chain corresponds to 388-397 (TALWIWQRRH).

This sequence belongs to the major facilitator superfamily. LplT (TC 2.A.1.42) family.

It is found in the cell inner membrane. Functionally, catalyzes the facilitated diffusion of 2-acyl-glycero-3-phosphoethanolamine (2-acyl-GPE) into the cell. This is Lysophospholipid transporter LplT from Shigella dysenteriae serotype 1 (strain Sd197).